The primary structure comprises 475 residues: Secreted triacylglycerol lipase LIP5 (475 aa).

The signal sequence occupies residues 1–19 (MYPCTLLMVLLCLAIMTHG). A disulfide bridge connects residues C129 and C300. S213 functions as the Nucleophile in the catalytic mechanism. N246 and N312 each carry an N-linked (GlcNAc...) asparagine glycan. D360 is a catalytic residue. The N-linked (GlcNAc...) asparagine glycan is linked to N369. Residue H394 is part of the active site. The N-linked (GlcNAc...) asparagine glycan is linked to N471.

This sequence belongs to the AB hydrolase superfamily. Lipase family. Class Lip subfamily.

The enzyme catalyses a triacylglycerol + H2O = a diacylglycerol + a fatty acid + H(+). The catalysed reaction is a monoacylglycerol + H2O = glycerol + a fatty acid + H(+). It catalyses the reaction a diacylglycerol + H2O = a monoacylglycerol + a fatty acid + H(+). Functionally, secreted lipase involved in Dandruff and seborrheic dermatitis (D/SD) probably via lipase-mediated breakdown of sebaceous lipids and release of irritating free fatty acids. Has triacylglycerol lipase activity and is able to hydrolyze triolein. Mostly converts monoolein to di- and triolein, while free fatty acids are only produced in low amounts. The sequence is that of Secreted triacylglycerol lipase LIP5 from Malassezia globosa (strain ATCC MYA-4612 / CBS 7966) (Dandruff-associated fungus).